An 875-amino-acid chain; its full sequence is Probable ATP-dependent RNA helicase DDX10 (875 aa).

The segment at 1–44 (MGKTVASLGQGTRPDPVRSFNRWKKKHSHRQHQKKERRKQLKKP) is disordered. The residue at position 4 (threonine 4) is a Phosphothreonine. Serine 7 is modified (phosphoserine). The span at 21-41 (NRWKKKHSHRQHQKKERRKQL) shows a compositional bias: basic residues. The Q motif signature appears at 69-97 (TRFSDFPLSKKTLKGLQEAQYRLVTEIQK). ATP is bound by residues 89 to 91 (YRL), glutamine 96, and 113 to 120 (AKTGSGKT). Residues 100–274 (IGLALQGKDV…RLSLKDPEYV (175 aa)) form the Helicase ATP-binding domain. Positions 222-225 (DEAD) match the DEAD box motif. A Helicase C-terminal domain is found at 300-449 (KISVLFSFLR…EIKINPEKLI (150 aa)). A disordered region spans residues 525-612 (LVKNPVTEAV…HTESVVSIEE (88 aa)). Serine 540 carries the phosphoserine modification. Lysine 556 carries the post-translational modification N6-acetyllysine. Basic and acidic residues predominate over residues 562–575 (KSGERLEETEHRLA). Residues 578–593 (DGDEEQDEETEDEETE) show a composition bias toward acidic residues. Residue threonine 587 is modified to Phosphothreonine. Positions 594–604 (DHLGKAREPHT) are enriched in basic and acidic residues. Residue lysine 652 forms a Glycyl lysine isopeptide (Lys-Gly) (interchain with G-Cter in SUMO2) linkage. Basic and acidic residues predominate over residues 734-744 (EEDKFDKEEYR). Residues 734–860 (EEDKFDKEEY…VEPLDTGLSL (127 aa)) are disordered. The span at 745–754 (KKIKAKHRER) shows a compositional bias: basic residues. Over residues 755–774 (RLKEREARREANKRQAKARD) the composition is skewed to basic and acidic residues. Over residues 775 to 789 (EEEAFLDWSDEDDGG) the composition is skewed to acidic residues. At serine 783 the chain carries Phosphoserine. The segment covering 797–831 (DPDKHRSSEESESEDTNHKMSDTKKKQETRKRNNT) has biased composition (basic and acidic residues).

The protein belongs to the DEAD box helicase family. DDX10/DBP4 subfamily. In terms of assembly, interacts with AIM2; this interaction promotes AIM2 stability. Interacts with SCNA; this interaction causes DDX10 mislocalization to the nucleoplasm and cytoplasmic inclusions.

The protein localises to the cytoplasm. It localises to the nucleus. The protein resides in the nucleolus. The enzyme catalyses ATP + H2O = ADP + phosphate + H(+). Functionally, putative ATP-dependent RNA helicase that plays various role in innate immunity or inflammation. Plays a role in the enhancement of AIM2-induced inflammasome activation by interacting with AIM2 and stabilizing its protein level. Negatively regulates viral infection by promoting interferon beta production and interferon stimulated genes/ISGs expression. The protein is Probable ATP-dependent RNA helicase DDX10 (Ddx10) of Mus musculus (Mouse).